We begin with the raw amino-acid sequence, 576 residues long: Arginine--tRNA ligase (576 aa).

The 'HIGH' region motif lies at 122 to 132 (PNVAKEMHVGH).

Belongs to the class-I aminoacyl-tRNA synthetase family. As to quaternary structure, monomer.

It is found in the cytoplasm. It carries out the reaction tRNA(Arg) + L-arginine + ATP = L-arginyl-tRNA(Arg) + AMP + diphosphate. The protein is Arginine--tRNA ligase of Mannheimia succiniciproducens (strain KCTC 0769BP / MBEL55E).